The primary structure comprises 511 residues: Potassium voltage-gated channel subfamily A member 10 (511 aa).

Residues Ile-22 to Lys-50 are disordered. Residues Val-218–Leu-238 traverse the membrane as a helical segment. Asn-256 is a glycosylation site (N-linked (GlcNAc...) asparagine). The chain crosses the membrane as a helical span at residues Phe-271 to Val-292. Cys-293 carries the S-palmitoyl cysteine lipid modification. Residues Ile-303–Leu-323 traverse the membrane as a helical segment. Asn-334 carries N-linked (GlcNAc...) asparagine glycosylation. The chain crosses the membrane as a helical; Voltage-sensor span at residues Ile-339 to Ser-358. The helical transmembrane segment at Leu-375–Phe-395 threads the bilayer. A Selectivity filter motif is present at residues Thr-421–Asp-426. The chain crosses the membrane as a helical span at residues Ile-436 to Ile-456. The disordered stretch occupies residues Ser-489–Lys-511. Residue Asn-498 is glycosylated (N-linked (GlcNAc...) asparagine).

The protein belongs to the potassium channel family. A (Shaker) (TC 1.A.1.2) subfamily. Kv1.8/KCNA10 sub-subfamily. Homotetramer. Interacts with KCN4B/POMP. Interaction with KCN4B/POMP is necessary for the modulation of channel activity by cAMP. Detected in kidney, in proximal tubules, glomerular endothelium, in vascular endothelium and in smooth muscle cells.

It localises to the membrane. The catalysed reaction is K(+)(in) = K(+)(out). The channel activity is up-regulated by cAMP. In terms of biological role, voltage-gated potassium ion channel that mediates K(+) permeability of excitable membranes. When opened in response to the voltage difference across the membrane, KCNA10 channel selectively allows the flow of potassium ions across the membrane down their electrochemical gradient. This is Potassium voltage-gated channel subfamily A member 10 from Homo sapiens (Human).